The sequence spans 310 residues: 4-hydroxyproline 2-epimerase (310 aa).

C88 serves as the catalytic Proton acceptor. Residues 89-90 (GH), H208, and D232 contribute to the substrate site. C236 acts as the Proton donor in catalysis. 237–238 (GT) contributes to the substrate binding site.

The protein belongs to the proline racemase family.

It carries out the reaction trans-4-hydroxy-L-proline = cis-4-hydroxy-D-proline. In terms of biological role, catalyzes the epimerization of trans-4-hydroxy-L-proline (t4LHyp) to cis-4-hydroxy-D-proline (c4DHyp). Is likely involved in a degradation pathway that converts t4LHyp to alpha-ketoglutarate. Displays no proline racemase activity. This Acinetobacter baumannii (strain ATCC 17978 / DSM 105126 / CIP 53.77 / LMG 1025 / NCDC KC755 / 5377) protein is 4-hydroxyproline 2-epimerase.